The primary structure comprises 150 residues: MAGKFHILLLNGPNLNMLGTREPDIYGSLTLDDIVSKLSEEAHQSGVKFSHLQSNAEFELINRIHSAQGNTDFILINPAAFTHTSVALRDALLTVKIPFIEIHLSNVHAREPFRHHSYLSDLAVGVICGLGVDGYSFALQAAVNRLSKFN.

Tyrosine 26 acts as the Proton acceptor in catalysis. Asparagine 77, histidine 83, and aspartate 90 together coordinate substrate. Histidine 103 acts as the Proton donor in catalysis. Residues leucine 104 to serine 105 and arginine 114 contribute to the substrate site.

It belongs to the type-II 3-dehydroquinase family. In terms of assembly, homododecamer.

The enzyme catalyses 3-dehydroquinate = 3-dehydroshikimate + H2O. It functions in the pathway metabolic intermediate biosynthesis; chorismate biosynthesis; chorismate from D-erythrose 4-phosphate and phosphoenolpyruvate: step 3/7. Functionally, catalyzes a trans-dehydration via an enolate intermediate. The sequence is that of 3-dehydroquinate dehydratase from Photorhabdus laumondii subsp. laumondii (strain DSM 15139 / CIP 105565 / TT01) (Photorhabdus luminescens subsp. laumondii).